We begin with the raw amino-acid sequence, 325 residues long: Replication factor C small subunit (325 aa).

44–51 serves as a coordination point for ATP; that stretch reads GPPGTGKT.

Belongs to the activator 1 small subunits family. RfcS subfamily. In terms of assembly, heteromultimer composed of small subunits (RfcS) and large subunits (RfcL).

Its function is as follows. Part of the RFC clamp loader complex which loads the PCNA sliding clamp onto DNA. In Thermofilum pendens (strain DSM 2475 / Hrk 5), this protein is Replication factor C small subunit.